Consider the following 120-residue polypeptide: NAD(P)H-quinone oxidoreductase subunit 3 (120 aa).

3 helical membrane-spanning segments follow: residues 6 to 26 (GYEYFLGFLLISGAVPILALT), 64 to 84 (MFALVFVIFDVETVFLYPWAV), and 89 to 109 (LGLLAFIEALVFITILVVALA).

It belongs to the complex I subunit 3 family. As to quaternary structure, NDH-1 can be composed of about 15 different subunits; different subcomplexes with different compositions have been identified which probably have different functions.

The protein localises to the cellular thylakoid membrane. It carries out the reaction a plastoquinone + NADH + (n+1) H(+)(in) = a plastoquinol + NAD(+) + n H(+)(out). It catalyses the reaction a plastoquinone + NADPH + (n+1) H(+)(in) = a plastoquinol + NADP(+) + n H(+)(out). Its function is as follows. NDH-1 shuttles electrons from an unknown electron donor, via FMN and iron-sulfur (Fe-S) centers, to quinones in the respiratory and/or the photosynthetic chain. The immediate electron acceptor for the enzyme in this species is believed to be plastoquinone. Couples the redox reaction to proton translocation, and thus conserves the redox energy in a proton gradient. Cyanobacterial NDH-1 also plays a role in inorganic carbon-concentration. The protein is NAD(P)H-quinone oxidoreductase subunit 3 of Prochlorococcus marinus (strain NATL1A).